The primary structure comprises 422 residues: Retinoic acid receptor RXR-beta-B (422 aa).

A modulating region spans residues 1-89 (MNSLPPSTSA…SGPMLSQKRM (89 aa)). 2 consecutive NR C4-type zinc fingers follow at residues 90 to 110 (CAIC…CEGC) and 126 to 150 (CRDN…YQKC). Positions 90–155 (CAICGDRSSG…RYQKCLAMGM (66 aa)) form a DNA-binding region, nuclear receptor. Positions 156-178 (KREAVQEERQKNKERDGDYECSS) are hinge. Residues 161–173 (QEERQKNKERDGD) show a composition bias toward basic and acidic residues. The segment at 161 to 182 (QEERQKNKERDGDYECSSSANE) is disordered. The 241-residue stretch at 181 to 421 (NEEMPVEKIL…TFLMEMLESP (241 aa)) folds into the NR LBD domain.

It belongs to the nuclear hormone receptor family. NR2 subfamily. Homodimer. Heterodimer; with a rar molecule. Binds DNA preferentially as a rar/rxr heterodimer. Heterodimerizes with rarga. In terms of tissue distribution, shows uniform expression from the blastula to mid-gastrula stages. At 12 hours post-fertilization (hpf), expressed ubiquitously but more weakly. At 24 hpf, restricted to the ventral diencephalon, pharangeal endoderm and trunk and tail mesoderm; mesoderm expression is in medial cells of each somite along the dorsoventral axis, forming stripes. At 48 hpf, expressed in forebrain, eye, midbrain and anterior hindbrain.

It is found in the nucleus. Receptor for retinoic acid. Retinoic acid receptors bind as heterodimers to their target response elements in response to their ligands, all-trans or 9-cis retinoic acid, and regulate gene expression in various biological processes. The rar/rxr heterodimers bind to the retinoic acid response elements (RARE) composed of tandem 5'-AGGTCA-3' sites known as DR1-DR5. The high affinity ligand for rxrs is 9-cis retinoic acid. The protein is Retinoic acid receptor RXR-beta-B (rxrbb) of Danio rerio (Zebrafish).